A 365-amino-acid chain; its full sequence is Aminomethyltransferase (365 aa).

It belongs to the GcvT family. The glycine cleavage system is composed of four proteins: P, T, L and H.

The catalysed reaction is N(6)-[(R)-S(8)-aminomethyldihydrolipoyl]-L-lysyl-[protein] + (6S)-5,6,7,8-tetrahydrofolate = N(6)-[(R)-dihydrolipoyl]-L-lysyl-[protein] + (6R)-5,10-methylene-5,6,7,8-tetrahydrofolate + NH4(+). In terms of biological role, the glycine cleavage system catalyzes the degradation of glycine. The polypeptide is Aminomethyltransferase (Yersinia pseudotuberculosis serotype O:1b (strain IP 31758)).